Here is a 28-residue protein sequence, read N- to C-terminus: trp operon leader peptide (28 aa).

Its function is as follows. This protein is involved in control of the biosynthesis of tryptophan. The sequence is that of trp operon leader peptide (trpL) from Serratia marcescens.